Consider the following 231-residue polypeptide: Probable septum site-determining protein MinC (231 aa).

Residues 101 to 125 (GKEKAPRPAPTPQAPAQNTTPVTKT) are disordered. Low complexity predominate over residues 114–123 (APAQNTTPVT).

The protein belongs to the MinC family. Interacts with MinD and FtsZ.

Its function is as follows. Cell division inhibitor that blocks the formation of polar Z ring septums. Rapidly oscillates between the poles of the cell to destabilize FtsZ filaments that have formed before they mature into polar Z rings. Prevents FtsZ polymerization. In Escherichia coli (strain ATCC 8739 / DSM 1576 / NBRC 3972 / NCIMB 8545 / WDCM 00012 / Crooks), this protein is Probable septum site-determining protein MinC.